Consider the following 302-residue polypeptide: Tegument protein VP22 (302 aa).

Positions 1 to 10 (MASSDGDRLC) are enriched in basic and acidic residues. Disordered regions lie at residues 1–42 (MASS…PDDS) and 125–167 (SFTK…TATS). Positions 154-244 (RPISFSTAPK…ANEADLGEGA (91 aa)) are interaction with gE. Positions 157-167 (SFSTAPKTATS) are enriched in polar residues. The short motif at 212–224 (LDRLLTGAVIRIT) is the Nuclear export signal element. The tract at residues 243–302 (GASVSKRGHNRKTGDLQGGMGNEPMYAQVRKPKSRTDTQTTGRITNRSRARSASRTDARK) is disordered.

The protein belongs to the alphaherpesvirinae VP22 tegument protein family. In terms of assembly, interacts with gE (via C-terminus); this interaction is necessary for the recruitment of VP22/ORF9 to the Golgi and its packaging into virions. Interacts with gM (via C-terminus). Interacts with VP16/ORF10; this interaction allows the formation of a tripartite complex composed of VP16/ORF10, VP22/ORF9 and VHS/ORF17. Interacts with the capsid-binding protein ORF44. Interacts with host CGAS. Post-translationally, highly phosphorylated in the host cell. Packaging is selective for underphosphorylated forms.

The protein localises to the virion tegument. It localises to the host cytoplasm. The protein resides in the host nucleus. It is found in the host Golgi apparatus. Functionally, tegument protein that plays different roles during the time course of infection. Participates in both the accumulation of viral mRNAs and viral protein translation at late time of infection. Modulates the RNase activity of the virion host shutoff protein ORF17 probably to ensure necessary levels of key cellular mRNAs and proteins. Plays a role in microtubule reorganization that occurs after viral infection by stabilizing microtubule network. Plays a role in the inhibition of host innate immune system by targeting the CGAS enzymatic activity which is the principal cytosolic DNA sensor that detects invading viral DNA. Acts by mediating disruption of liquid-like droplets in which CGAS is activated, thereby preventing CGAS activity. The protein is Tegument protein VP22 of Varicella-zoster virus (strain Oka vaccine) (HHV-3).